We begin with the raw amino-acid sequence, 314 residues long: Testisin (314 aa).

Positions Met1–Arg19 are cleaved as a signal peptide. Residues Lys20–Arg41 constitute a propeptide that is removed on maturation. 2 disulfides stabilise this stretch: Cys33-Cys157 and Cys67-Cys83. The Peptidase S1 domain maps to Ile42–Ala286. Residues His82 and Asp137 each act as charge relay system in the active site. 2 N-linked (GlcNAc...) asparagine glycosylation sites follow: Asn167 and Asn200. 3 disulfides stabilise this stretch: Cys171/Cys244, Cys204/Cys223, and Cys234/Cys262. Catalysis depends on Ser238, which acts as the Charge relay system. An N-linked (GlcNAc...) asparagine glycan is attached at Asn273. Ser288 carries the GPI-anchor amidated serine lipid modification. The propeptide at Gly289–Val314 is removed in mature form.

It belongs to the peptidase S1 family. In terms of tissue distribution, expressed predominantly in premeiotic testicular germ cells, mostly late pachytene and diplotene spermatocytes.

It is found in the cell membrane. In terms of biological role, could regulate proteolytic events associated with testicular germ cell maturation. This is Testisin (PRSS21) from Homo sapiens (Human).